The chain runs to 185 residues: Crossover junction endodeoxyribonuclease RuvC (185 aa).

Catalysis depends on residues Asp-16, Glu-75, and Asp-147. The Mg(2+) site is built by Asp-16, Glu-75, and Asp-147.

Belongs to the RuvC family. Homodimer which binds Holliday junction (HJ) DNA. The HJ becomes 2-fold symmetrical on binding to RuvC with unstacked arms; it has a different conformation from HJ DNA in complex with RuvA. In the full resolvosome a probable DNA-RuvA(4)-RuvB(12)-RuvC(2) complex forms which resolves the HJ. The cofactor is Mg(2+).

It localises to the cytoplasm. It catalyses the reaction Endonucleolytic cleavage at a junction such as a reciprocal single-stranded crossover between two homologous DNA duplexes (Holliday junction).. Functionally, the RuvA-RuvB-RuvC complex processes Holliday junction (HJ) DNA during genetic recombination and DNA repair. Endonuclease that resolves HJ intermediates. Cleaves cruciform DNA by making single-stranded nicks across the HJ at symmetrical positions within the homologous arms, yielding a 5'-phosphate and a 3'-hydroxyl group; requires a central core of homology in the junction. The consensus cleavage sequence is 5'-(A/T)TT(C/G)-3'. Cleavage occurs on the 3'-side of the TT dinucleotide at the point of strand exchange. HJ branch migration catalyzed by RuvA-RuvB allows RuvC to scan DNA until it finds its consensus sequence, where it cleaves and resolves the cruciform DNA. The chain is Crossover junction endodeoxyribonuclease RuvC from Aromatoleum aromaticum (strain DSM 19018 / LMG 30748 / EbN1) (Azoarcus sp. (strain EbN1)).